A 654-amino-acid polypeptide reads, in one-letter code: Translation factor GUF1, mitochondrial (654 aa).

The region spanning 57–237 is the tr-type G domain; the sequence is ENYRNFSIVA…SVIKNIPSPV (181 aa). GTP is bound by residues 66–73, 130–134, and 184–187; these read AHVDHGKS, DTPGH, and NKID.

The protein belongs to the TRAFAC class translation factor GTPase superfamily. Classic translation factor GTPase family. LepA subfamily.

The protein localises to the mitochondrion inner membrane. It carries out the reaction GTP + H2O = GDP + phosphate + H(+). Functionally, promotes mitochondrial protein synthesis. May act as a fidelity factor of the translation reaction, by catalyzing a one-codon backward translocation of tRNAs on improperly translocated ribosomes. Binds to mitochondrial ribosomes in a GTP-dependent manner. The polypeptide is Translation factor GUF1, mitochondrial (Candida albicans (strain WO-1) (Yeast)).